Consider the following 103-residue polypeptide: Histone H4 (103 aa).

The segment covering 1 to 14 (MTGRGKGGKGLGKG) has biased composition (gly residues). Residues 1–20 (MTGRGKGGKGLGKGGAKRHR) form a disordered region. N6-acetyl-N6-methyllysine; alternate is present on residues lysine 6 and lysine 13. Residues 17-21 (KRHRK) mediate DNA binding.

Belongs to the histone H4 family. The nucleosome is a histone octamer containing two molecules each of H2A, H2B, H3 and H4 assembled in one H3-H4 heterotetramer and two H2A-H2B heterodimers. The octamer wraps approximately 147 bp of DNA.

Its subcellular location is the nucleus. It is found in the chromosome. Its function is as follows. Core component of nucleosome. Nucleosomes wrap and compact DNA into chromatin, limiting DNA accessibility to the cellular machineries which require DNA as a template. Histones thereby play a central role in transcription regulation, DNA repair, DNA replication and chromosomal stability. DNA accessibility is regulated via a complex set of post-translational modifications of histones, also called histone code, and nucleosome remodeling. This is Histone H4 (His4) from Myrmica ruginodis (Red ant).